The sequence spans 288 residues: Phenazine biosynthesis-like domain-containing protein 2 (288 aa).

Residue glutamate 46 is part of the active site.

This sequence belongs to the PhzF family.

The sequence is that of Phenazine biosynthesis-like domain-containing protein 2 (Pbld2) from Mus musculus (Mouse).